The sequence spans 208 residues: 3,4-dihydroxy-2-butanone 4-phosphate synthase (208 aa).

Threonine 3 carries the post-translational modification Phosphothreonine. Glutamate 27 lines the Mg(2+) pocket. Aspartate 31 lines the D-ribulose 5-phosphate pocket. An S-glutathionyl cysteine; by GRX2 modification is found at cysteine 56. Residues threonine 88 and 145-149 (RRGHT) each bind D-ribulose 5-phosphate. Histidine 148 contributes to the Mg(2+) binding site.

The protein belongs to the DHBP synthase family. In terms of assembly, homodimer. Mg(2+) is required as a cofactor. Mn(2+) serves as cofactor. S-glutathionylation of Cys-56 is reversible and dependent on the cytoplasmic isoform of glutaredoxin-2.

The protein resides in the cytoplasm. The protein localises to the nucleus. Its subcellular location is the mitochondrion intermembrane space. It catalyses the reaction D-ribulose 5-phosphate = (2S)-2-hydroxy-3-oxobutyl phosphate + formate + H(+). Its pathway is cofactor biosynthesis; riboflavin biosynthesis; 2-hydroxy-3-oxobutyl phosphate from D-ribulose 5-phosphate: step 1/1. Functionally, catalyzes the conversion of D-ribulose 5-phosphate to formate and 3,4-dihydroxy-2-butanone 4-phosphate. Also has an unrelated function in expression of mitochondrial respiration. The polypeptide is 3,4-dihydroxy-2-butanone 4-phosphate synthase (RIB3) (Saccharomyces cerevisiae (strain ATCC 204508 / S288c) (Baker's yeast)).